Consider the following 93-residue polypeptide: UPF0358 protein lin1058 (93 aa).

The protein belongs to the UPF0358 family.

In Listeria innocua serovar 6a (strain ATCC BAA-680 / CLIP 11262), this protein is UPF0358 protein lin1058.